The primary structure comprises 402 residues: p-cumate 2,3-dioxygenase system, ferredoxin--NAD(+) reductase component (402 aa).

Residues Ala-16, Lys-51, Val-83, Arg-131, and Asp-275 each coordinate FAD.

Belongs to the FAD-dependent oxidoreductase family. The p-cumate 2,3-dioxygenase multicomponent enzyme system is composed of an electron transfer component and a dioxygenase component (iron sulfur protein (ISP)). The electron transfer component is composed of a ferredoxin reductase (CmtAa) and a ferredoxin (CmtAd), and the dioxygenase component is formed of a large alpha subunit (CmtAb) and a small beta subunit (CmtAc). The cofactor is FAD.

The catalysed reaction is 2 reduced [2Fe-2S]-[ferredoxin] + NAD(+) + H(+) = 2 oxidized [2Fe-2S]-[ferredoxin] + NADH. Its pathway is aromatic compound metabolism; p-cumate degradation; acetaldehyde and pyruvate from p-cumate. Component of the p-cumate 2,3-dioxygenase multicomponent enzyme system which catalyzes the incorporation of both atoms of molecular oxygen into p-cumate to form cis-2,3-dihydroxy-2,3-dihydro-p-cumate. Ferredoxin reductase catalyzes the transfer of electrons from NADH to ferredoxin (CmtAd). The chain is p-cumate 2,3-dioxygenase system, ferredoxin--NAD(+) reductase component from Pseudomonas putida (Arthrobacter siderocapsulatus).